We begin with the raw amino-acid sequence, 737 residues long: uncharacterized protein (737 aa).

7 helical membrane passes run 11–31 (LSLLLFYFLAFLLLWEWLRPL), 36–56 (ETKHTGFFSVFIGLTFLLTFF), 60–80 (WFVTVPFCVIFTLISIHILFY), 118–138 (TLLFFVLLWLLVYLLHYWVIY), 142–162 (ILFFFLMTVAYITILDTFTPY), 164–184 (ATFAVIRIVLIGFFMLGLLYL), and 200–220 (VLKWFLPLSVLVLAATGFGLA). The tract at residues 556-611 (PAQFTSSDTKDSGSDSSSSPKKAKEKQKEEKKQPQKEEKQKEKREPAVSKKPSASH) is disordered. Over residues 581 to 603 (KQKEEKKQPQKEEKQKEKREPAV) the composition is skewed to basic and acidic residues. The helical transmembrane segment at 618–638 (LYAALAVLAVLLVAAVLLYVF) threads the bilayer.

The protein resides in the cell membrane. This is an uncharacterized protein from Bacillus subtilis (strain 168).